The primary structure comprises 652 residues: Acetyl-coenzyme A synthetase (652 aa).

Residues Arg-191–Arg-194, Thr-311, and Asn-335 contribute to the CoA site. Residues Gly-387 to Pro-389, Asp-411 to Thr-416, Asp-500, and Arg-515 each bind ATP. Ser-523 serves as a coordination point for CoA. ATP is bound at residue Arg-526. Mg(2+)-binding residues include Val-537, His-539, and Ile-542. CoA is bound at residue Arg-584. Residue Lys-609 is modified to N6-acetyllysine; by Pat.

It belongs to the ATP-dependent AMP-binding enzyme family. Monomer. The cofactor is Mg(2+). Acetylated. Deacetylation by the SIR2-homolog deacetylase activates the enzyme.

The catalysed reaction is acetate + ATP + CoA = acetyl-CoA + AMP + diphosphate. In terms of biological role, catalyzes the conversion of acetate into acetyl-CoA (AcCoA), an essential intermediate at the junction of anabolic and catabolic pathways. Acs undergoes a two-step reaction. In the first half reaction, Acs combines acetate with ATP to form acetyl-adenylate (AcAMP) intermediate. In the second half reaction, it can then transfer the acetyl group from AcAMP to the sulfhydryl group of CoA, forming the product AcCoA. Required for acetate recapture but not for acetate excretion when this organism is grown on ethanolamine. Functionally, enables the cell to use acetate during aerobic growth to generate energy via the TCA cycle, and biosynthetic compounds via the glyoxylate shunt. Acetylates CheY, the response regulator involved in flagellar movement and chemotaxis. The sequence is that of Acetyl-coenzyme A synthetase from Salmonella typhimurium (strain LT2 / SGSC1412 / ATCC 700720).